The sequence spans 81 residues: MGQWLIWCIRFYQRFLSPLKPPTCRFYPTCSNYGIEAIRRFGAIKGGWLTAKRILKCHPFHPGGFDPVPESSEHAKRNKIT.

It belongs to the UPF0161 family.

It is found in the cell membrane. Functionally, could be involved in insertion of integral membrane proteins into the membrane. This chain is Putative membrane protein insertion efficiency factor, found in Geobacillus kaustophilus (strain HTA426).